Reading from the N-terminus, the 150-residue chain is Transthyretin (150 aa).

An N-terminal signal peptide occupies residues 1–20; it reads MAFHSMLLVFLAGLVFLTEA. Sulfocysteine is present on C33. Positions 38, 77, and 140 each coordinate L-thyroxine.

It belongs to the transthyretin family. In terms of assembly, homotetramer. Dimer of dimers. In the homotetramer, subunits assemble around a central channel that can accommodate two ligand molecules. Interacts with RBP4. In terms of processing, sulfonation of the reactive cysteine Cys-33 enhances the stability of the native conformation of TTR, avoiding misassembly of the protein leading to amyloid formation. Strongly expressed in the brain, and to a lesser extent in the eye.

It localises to the secreted. Its function is as follows. Thyroid hormone-binding protein, with a much higher binding affinity for triiodothyronine (T3) than for thyroxine (T4). Probably transports triiodothyronine from the bloodstream to the brain. This chain is Transthyretin (TTR), found in Crocodylus porosus (Saltwater crocodile).